A 365-amino-acid polypeptide reads, in one-letter code: MFDMYIESGGKKLRCGYTTGSCAAAAAKAATYMLFNKKDISVIEIDTPKNIKLNLEIQDIQVEKNSISCSIVKDGGDDIDATSGLEIFAKAEEVEEGFELCGGEGVGVVTKEGLFVEKGQPAINPVPREMIKKEVLSVLPKDKGVRITIFVPRGREIAKKTFNPRLGIVNGISILGTTGIVYPMSEEALKESIRIEIRQKAVNNKDLVFVFGNMGERFLRERGYKKDNIVVISNYVGFSIECALAQGIKDLTIVGHIGKLSKIAFGCFNTHSRVSDVRLEVIALELTLMGYDLELVQKVLDQKTSEGAVRLLGEDFPMLYERIGEKVLNRLDIYAYGEANFNILMYYGSKEMKLLYESKNSNLFD.

The protein belongs to the CbiD family.

The catalysed reaction is Co-precorrin-5B + S-adenosyl-L-methionine = Co-precorrin-6A + S-adenosyl-L-homocysteine. Its pathway is cofactor biosynthesis; adenosylcobalamin biosynthesis; cob(II)yrinate a,c-diamide from sirohydrochlorin (anaerobic route): step 6/10. Its function is as follows. Catalyzes the methylation of C-1 in cobalt-precorrin-5B to form cobalt-precorrin-6A. The polypeptide is Cobalt-precorrin-5B C(1)-methyltransferase (Clostridium perfringens (strain 13 / Type A)).